The primary structure comprises 442 residues: UDP-N-acetylmuramate--L-alanine ligase (442 aa).

Residue 109 to 115 (GAHGKTS) coordinates ATP.

The protein belongs to the MurCDEF family.

The protein localises to the cytoplasm. The catalysed reaction is UDP-N-acetyl-alpha-D-muramate + L-alanine + ATP = UDP-N-acetyl-alpha-D-muramoyl-L-alanine + ADP + phosphate + H(+). It functions in the pathway cell wall biogenesis; peptidoglycan biosynthesis. In terms of biological role, cell wall formation. The protein is UDP-N-acetylmuramate--L-alanine ligase of Streptococcus pyogenes serotype M28 (strain MGAS6180).